Consider the following 258-residue polypeptide: 4,5-dihydroxyphthalate decarboxylase (258 aa).

It to P.testosteroni DHP decarboxylase.

It carries out the reaction 4,5-dihydroxyphthalate + H(+) = 3,4-dihydroxybenzoate + CO2. Its pathway is xenobiotic degradation; phthalate degradation; 3,4-dihydroxybenzoate from phthalate: step 3/3. This is 4,5-dihydroxyphthalate decarboxylase (pht5) from Pseudomonas putida (Arthrobacter siderocapsulatus).